A 293-amino-acid polypeptide reads, in one-letter code: MSITAGMVKELRERTGSGMMECKKALTETGGDLEAAVELMRKQGLAKADKKSGRTAAEGRICARVSEDGKAAAIVEVNCETDFVAKGDDFVKFADDVAAVALASSAMTVEELLAGEMRAGATVDQVRREMIAKIGENINVRRFERLSSQDGRIASYLHGTRIGVLVELVGGDAELGKDIAMHIAASKPLCCDEKGVPAEVIAKEKEIFSAQAQASGKPANIVEKMVEGRIGKFLGEITLVGQPFVKDPDQTVGKLLQSKGASVVRFVRFEVGEGIEKEETNFAEEVMAQVRAS.

The tract at residues 81 to 84 is involved in Mg(2+) ion dislocation from EF-Tu; that stretch reads TDFV.

The protein belongs to the EF-Ts family.

It is found in the cytoplasm. In terms of biological role, associates with the EF-Tu.GDP complex and induces the exchange of GDP to GTP. It remains bound to the aminoacyl-tRNA.EF-Tu.GTP complex up to the GTP hydrolysis stage on the ribosome. This Methylococcus capsulatus (strain ATCC 33009 / NCIMB 11132 / Bath) protein is Elongation factor Ts.